Here is a 245-residue protein sequence, read N- to C-terminus: MRVGVLGAKGKVGSTMVAAVQAAEDLTLSAEVDAGDPLSLLTDGGTEAVIDFTHPDVVMGNLEFLVRNGIHAVVGTTGFTAERLAQVREWLADSPGTSVLVAPNFAIGAVLSMHFAKQAARFFDSAEVIELHHPHKADAPSGTATRTAKLIAEARKGLPPNPDATSTSLPGARGADVDGIPVHAVRLAGLVAHQEILFGTEGETLSIRHDSLDRTSFVPGVLLAVRRIREHPGLTVGLEPLLDLG.

Residues 7–12 (GAKGKV), aspartate 33, 75–77 (GTT), and 102–105 (APNF) contribute to the NAD(+) site. Histidine 132 serves as the catalytic Proton donor/acceptor. Histidine 133 lines the (S)-2,3,4,5-tetrahydrodipicolinate pocket. Lysine 136 serves as the catalytic Proton donor. Position 142 to 143 (142 to 143 (GT)) interacts with (S)-2,3,4,5-tetrahydrodipicolinate.

This sequence belongs to the DapB family.

Its subcellular location is the cytoplasm. It carries out the reaction (S)-2,3,4,5-tetrahydrodipicolinate + NAD(+) + H2O = (2S,4S)-4-hydroxy-2,3,4,5-tetrahydrodipicolinate + NADH + H(+). It catalyses the reaction (S)-2,3,4,5-tetrahydrodipicolinate + NADP(+) + H2O = (2S,4S)-4-hydroxy-2,3,4,5-tetrahydrodipicolinate + NADPH + H(+). It participates in amino-acid biosynthesis; L-lysine biosynthesis via DAP pathway; (S)-tetrahydrodipicolinate from L-aspartate: step 4/4. Its function is as follows. Catalyzes the conversion of 4-hydroxy-tetrahydrodipicolinate (HTPA) to tetrahydrodipicolinate. This chain is 4-hydroxy-tetrahydrodipicolinate reductase, found in Mycolicibacterium paratuberculosis (strain ATCC BAA-968 / K-10) (Mycobacterium paratuberculosis).